The chain runs to 705 residues: Elongation factor G (705 aa).

Residues 6–282 enclose the tr-type G domain; the sequence is NKVRNIGIMA…AVVDFLPSPL (277 aa). Residues 15-22, 79-83, and 133-136 contribute to the GTP site; these read AHIDAGKT, DTPGH, and NKMD.

The protein belongs to the TRAFAC class translation factor GTPase superfamily. Classic translation factor GTPase family. EF-G/EF-2 subfamily.

Its subcellular location is the cytoplasm. Its function is as follows. Catalyzes the GTP-dependent ribosomal translocation step during translation elongation. During this step, the ribosome changes from the pre-translocational (PRE) to the post-translocational (POST) state as the newly formed A-site-bound peptidyl-tRNA and P-site-bound deacylated tRNA move to the P and E sites, respectively. Catalyzes the coordinated movement of the two tRNA molecules, the mRNA and conformational changes in the ribosome. The sequence is that of Elongation factor G from Corynebacterium glutamicum (strain ATCC 13032 / DSM 20300 / JCM 1318 / BCRC 11384 / CCUG 27702 / LMG 3730 / NBRC 12168 / NCIMB 10025 / NRRL B-2784 / 534).